Reading from the N-terminus, the 457-residue chain is MSWNQYPGGGHHQQGGYGYRPPPPQWAQQGPPPPPNMGYRPPPPPQAYYNNPPPPQQYQRPAPQQNGYQQGGYQQQQQSQGNYRTSNGGYVPPTGAPVEASYHHTGAGYTPPSGTPQRTSAPYGAGAPIRPPSQAQHYGPQLQGQGGQSAQPYFQYSQCTGKKKALCIGINYVGSSSALAGCINDAHNVQKFLIERYGYKSEDIVMLTDDARNPRQIPTRANILAAMHWLVQGAQPNDSLFFHYSGHGGQTPDLDGDEDDGYDEVIYPLDFKTAGHIVDDDMHNIMVRPLPAGCRLTAIYDSCHSGTALDLPYIYSTEGVIKEPNLLAEAGQGLLSAGMSYLRGDTGGMLQGIMGIGKKVMNQNSGAMEKARQTKTSPADVISWSGCKDSQTSADTQEAGRATGAMSYAFIAALTKYPQQSYVQLLNTIRDELKGKYDQKPQLSASHPMDTNILFIC.

The segment at 1–149 (MSWNQYPGGG…PQLQGQGGQS (149 aa)) is disordered. Positions 7–18 (PGGGHHQQGGYG) are enriched in gly residues. Residues 20-56 (RPPPPQWAQQGPPPPPNMGYRPPPPPQAYYNNPPPPQ) show a composition bias toward pro residues. Over residues 57 to 83 (QYQRPAPQQNGYQQGGYQQQQQSQGNY) the composition is skewed to low complexity. Active-site residues include H247 and C303.

This sequence belongs to the peptidase C14B family.

Its function is as follows. Involved in cell death (apoptosis). This Cryptococcus neoformans var. neoformans serotype D (strain JEC21 / ATCC MYA-565) (Filobasidiella neoformans) protein is Metacaspase-1 (MCA1).